The sequence spans 614 residues: Acid phosphatase (614 aa).

Positions 1-22 (MKGTAASALLVALSATAAQARP) are cleaved as a signal peptide. A Fibronectin type-III domain is found at 80–176 (IPKGMHIHYQ…EVLSFKTSRP (97 aa)). N-linked (GlcNAc...) asparagine glycans are attached at residues Asn-110, Asn-161, Asn-242, Asn-295, Asn-333, Asn-340, Asn-352, Asn-408, Asn-429, Asn-512, Asn-523, Asn-559, and Asn-578. The propeptide occupies 606–614 (VAGGKKLHS).

Monomer. Requires Cu cation as cofactor. Post-translationally, glycosylated; probably with N-linked high-mannose oligosaccharides.

The protein localises to the secreted. It catalyses the reaction a phosphate monoester + H2O = an alcohol + phosphate. Competitively inhibited by phosphomycin and inorganic orthophosphate. This Aspergillus ficuum protein is Acid phosphatase (aphA).